A 72-amino-acid polypeptide reads, in one-letter code: uncharacterized protein (72 aa).

The N-terminal stretch at 1-22 (MQSNFIFATLLVLLSLLTFTYA) is a signal peptide. At 23 to 28 (SGSSSM) the chain is on the extracellular side. A helical membrane pass occupies residues 29-49 (TSSSMPMFGGAIVAAFAFAIF). Topologically, residues 50 to 72 (SRLAQNFAPRAIFSLLPYHSVSC) are cytoplasmic.

The protein resides in the membrane. This is an uncharacterized protein from Dictyostelium discoideum (Social amoeba).